Here is a 703-residue protein sequence, read N- to C-terminus: Ion-translocating oxidoreductase complex subunit C (703 aa).

4Fe-4S ferredoxin-type domains lie at 368–397 (MAPQ…QQLY) and 407–436 (KARN…VQYY). [4Fe-4S] cluster contacts are provided by C377, C380, C383, C387, C416, C419, C422, and C426. Disordered stretches follow at residues 505–558 (AVPA…EDPR) and 653–674 (AQQA…EEDP). Over residues 524–539 (AAREARKAQARERRAQ) the composition is skewed to basic and acidic residues.

This sequence belongs to the 4Fe4S bacterial-type ferredoxin family. RnfC subfamily. In terms of assembly, the complex is composed of six subunits: RnfA, RnfB, RnfC, RnfD, RnfE and RnfG. The cofactor is [4Fe-4S] cluster.

It localises to the cell inner membrane. Functionally, part of a membrane-bound complex that couples electron transfer with translocation of ions across the membrane. This is Ion-translocating oxidoreductase complex subunit C from Serratia proteamaculans (strain 568).